The chain runs to 333 residues: Ephrin-B2 (333 aa).

Positions 1–27 (MAVRRDSVWKYCWGVLMVLCRTAISKS) are cleaved as a signal peptide. Residues 28–164 (IVLEPIYWNS…TRAMKILMKV (137 aa)) form the Ephrin RBD domain. Over 28 to 229 (IVLEPIYWNS…ILGSEVALFA (202 aa)) the chain is Extracellular. Asparagine 36 carries an N-linked (GlcNAc...) asparagine glycan. Disulfide bonds link cysteine 62-cysteine 101 and cysteine 89-cysteine 153. The N-linked (GlcNAc...) asparagine glycan is linked to asparagine 139. The tract at residues 165–213 (GQDASSAGSTRNKDPTRRPELEAGTNGRSSTTSPFVKPNPGSSTDGNSA) is disordered. Residues 175-185 (RNKDPTRRPEL) show a composition bias toward basic and acidic residues. Polar residues predominate over residues 190–213 (NGRSSTTSPFVKPNPGSSTDGNSA). Residues 230-250 (GIASGCIIFIVIIITLVVLLL) traverse the membrane as a helical segment. The Cytoplasmic portion of the chain corresponds to 251–333 (KYRRRHRKHS…QSPANIYYKV (83 aa)). Phosphoserine is present on serine 260. Threonine 274 bears the Phosphothreonine mark. At arginine 277 the chain carries Omega-N-methylarginine. Positions 331-333 (YKV) match the PDZ-binding motif.

Belongs to the ephrin family. Interacts with PDZRN3. Binds to the receptor tyrosine kinases EPHA4, EPHB4 and EPHA3. As to quaternary structure, (Microbial infection) Interacts with Hendra virus and Nipah virus G protein. In terms of processing, inducible phosphorylation of tyrosine residues in the cytoplasmic domain. In terms of tissue distribution, lung and kidney.

Its subcellular location is the cell membrane. It is found in the cell junction. It localises to the adherens junction. In terms of biological role, cell surface transmembrane ligand for Eph receptors, a family of receptor tyrosine kinases which are crucial for migration, repulsion and adhesion during neuronal, vascular and epithelial development. Binds promiscuously Eph receptors residing on adjacent cells, leading to contact-dependent bidirectional signaling into neighboring cells. The signaling pathway downstream of the receptor is referred to as forward signaling while the signaling pathway downstream of the ephrin ligand is referred to as reverse signaling. Binds to receptor tyrosine kinase including EPHA4, EPHA3 and EPHB4. Together with EPHB4 plays a central role in heart morphogenesis and angiogenesis through regulation of cell adhesion and cell migration. EPHB4-mediated forward signaling controls cellular repulsion and segregation from EFNB2-expressing cells. May play a role in constraining the orientation of longitudinally projecting axons. (Microbial infection) Acts as a receptor for Hendra virus and Nipah virus. The protein is Ephrin-B2 (EFNB2) of Homo sapiens (Human).